The primary structure comprises 2995 residues: Striated muscle preferentially expressed protein kinase (2995 aa).

The Ig-like 1 domain maps to 27-109; sequence PPVFLRKLKW…GEARTSAVLA (83 aa). Cysteine 50 and cysteine 93 are oxidised to a cystine. 2 disordered regions span residues 250–272 and 384–467; these read ITGS…KVSQ and LTQT…NSKP. The span at 384–404 shows a compositional bias: polar residues; sequence LTQTDKQSSVSTESVPTQVIQ. A compositionally biased stretch (low complexity) spans 454-464; it reads PPEMNENQENN. Ig-like domains lie at 613 to 701 and 714 to 802; these read PAES…EELI and PLFT…AELY. An intrachain disulfide couples cysteine 639 to cysteine 691. A disordered region spans residues 815–834; it reads SRLEKMPSIPEEPEVPEGEV. One can recognise an Ig-like 4 domain in the interval 840–930; that stretch reads PDFIKPLSDL…AACYAHLYVA (91 aa). A disulfide bond links cysteine 861 and cysteine 912. A Fibronectin type-III 1 domain is found at 937–1035; it reads PDGPPVIESV…TDLVQLVDRG (99 aa). An Ig-like 5 domain is found at 1135 to 1224; that stretch reads PPIFETIMED…GSVSCKAELT (90 aa). The 251-residue stretch at 1255 to 1505 folds into the Protein kinase 1 domain; that stretch reads YDIHKEIGRG…ATECLLHPWF (251 aa). Residues 1261–1269 and lysine 1283 each bind ATP; that span reads IGRGAFSYV. Aspartate 1372 acts as the Proton acceptor in catalysis. Disordered regions lie at residues 1559–1582, 1776–1839, 2017–2058, 2163–2189, 2211–2254, and 2268–2322; these read VPRN…DIDE, RNFR…STGD, LKRL…TGLK, VHSR…VEKQ, SGIS…KMDI, and SKET…KEDF. A compositionally biased stretch (polar residues) spans 1786-1795; the sequence is SGDSGTFNND. The segment covering 2274-2284 has biased composition (low complexity); it reads SSSSAHSIESS. Residues 2289 to 2299 are compositionally biased toward basic and acidic residues; it reads TEIRSRWDRWG. Residues 2323-2413 form the Ig-like 6 domain; sequence PPVFHIALKD…ASVTTSCILT (91 aa). Residues cysteine 2345 and cysteine 2397 are joined by a disulfide bond. The Fibronectin type-III 2 domain maps to 2420 to 2513; it reads CPGTPEIRQI…DGVSIDTKVT (94 aa). 2 disordered regions span residues 2574–2609 and 2648–2676; these read PKMS…YTAP and GEGA…LRQG. Composition is skewed to polar residues over residues 2587-2605 and 2652-2674; these read SSVN…SPRS and SSPT…TTLR. The 253-residue stretch at 2682 to 2934 folds into the Protein kinase 2 domain; the sequence is YSFLDEKARG…IKDCLNHSWL (253 aa). ATP contacts are provided by residues 2688–2696 and lysine 2711; that span reads KARGRFGVI. Aspartate 2801 (proton acceptor) is an active-site residue.

This sequence belongs to the protein kinase superfamily. CAMK Ser/Thr protein kinase family. Post-translationally, may be autophosphorylated. As to expression, preferentially expressed in striated muscle.

Its subcellular location is the nucleus. The enzyme catalyses L-seryl-[protein] + ATP = O-phospho-L-seryl-[protein] + ADP + H(+). It catalyses the reaction L-threonyl-[protein] + ATP = O-phospho-L-threonyl-[protein] + ADP + H(+). This is Striated muscle preferentially expressed protein kinase (speg) from Danio rerio (Zebrafish).